Consider the following 502-residue polypeptide: MEFSVKSGSPEKQRSACIVVGVFEPRRLSPIAEQLDKISGGYISSLLRRGDLEGKPGQMLLLHQVPNILSERVLLVGCGKERELGERQYKDIIKKTISTLNETGSMEAVCFLTELHVKGRDTYWKVRQAVESTKDSLYTFNQFKSNKPETRRPLRKLVFNVPTRRELNLGEKAIAHGLSIASGVKASKDLGNMPPNVANPAYLASQARRLADDYETVTTKIIGEEEMKKLGMTSYLAVGQGSHNESMMSIMEYKGHPDPTAKPIVLIGKGLTFDSGGISIKPSEGMDEMKYDMCGAASVFGAMKALAKLNLPLNVVGVLAGCENMPSSNSYRPGDILTTMSGQTVEVLNTDAEGRLVLCDALTYVERYEPECVVDVATLTGACVVALGHHISGLISNHNPLAHELINASEQSGDRAWRLPMAEEYNEQLSSPFADMGNIGGKAAGTITAGCFLSRFAKKYHWAHIDSAGTAWVSGANKGSTGRPVSLLVQFLLNRSGQENEE.

Residues lysine 269 and aspartate 274 each contribute to the Mn(2+) site. Lysine 281 is an active-site residue. Aspartate 292, aspartate 351, and glutamate 353 together coordinate Mn(2+). The active site involves arginine 355.

It belongs to the peptidase M17 family. The cofactor is Mn(2+).

The protein localises to the cytoplasm. It carries out the reaction Release of an N-terminal amino acid, Xaa-|-Yaa-, in which Xaa is preferably Leu, but may be other amino acids including Pro although not Arg or Lys, and Yaa may be Pro. Amino acid amides and methyl esters are also readily hydrolyzed, but rates on arylamides are exceedingly low.. It catalyses the reaction Release of an N-terminal amino acid, preferentially leucine, but not glutamic or aspartic acids.. Presumably involved in the processing and regular turnover of intracellular proteins. Catalyzes the removal of unsubstituted N-terminal amino acids from various peptides. The sequence is that of Probable cytosol aminopeptidase from Aliivibrio fischeri (strain MJ11) (Vibrio fischeri).